The sequence spans 665 residues: Translation factor guf1, mitochondrial (665 aa).

A mitochondrion-targeting transit peptide spans 1–53 (MRGCLQVLRWLSTSPARRPVSSGLRLRSYEIVSPSILRPFTSTVRRQAQASRN). One can recognise a tr-type G domain in the interval 67 to 247 (ERFRNFCIVA…TVIERIPAPV (181 aa)). Residues 76–83 (AHVDHGKS), 140–144 (DTPGH), and 194–197 (NKVD) contribute to the GTP site.

The protein belongs to the TRAFAC class translation factor GTPase superfamily. Classic translation factor GTPase family. LepA subfamily.

The protein resides in the mitochondrion inner membrane. It carries out the reaction GTP + H2O = GDP + phosphate + H(+). Functionally, promotes mitochondrial protein synthesis. May act as a fidelity factor of the translation reaction, by catalyzing a one-codon backward translocation of tRNAs on improperly translocated ribosomes. Binds to mitochondrial ribosomes in a GTP-dependent manner. This is Translation factor guf1, mitochondrial (guf1) from Talaromyces stipitatus (strain ATCC 10500 / CBS 375.48 / QM 6759 / NRRL 1006) (Penicillium stipitatum).